Consider the following 124-residue polypeptide: uncharacterized protein (124 aa).

Residues 1-65 form a disordered region; the sequence is MAENSRYVRL…RPASSSNPDY (65 aa). Residues 37–47 show a composition bias toward polar residues; that stretch reads LNSNDAESQQV.

This is an uncharacterized protein from Microplitis demolitor (Parasitoid wasp).